The primary structure comprises 337 residues: DNA-directed RNA polymerase subunit alpha (337 aa).

An alpha N-terminal domain (alpha-NTD) region spans residues 1-231; the sequence is MRNITISAYT…KQLSVFDKIT (231 aa). The alpha C-terminal domain (alpha-CTD) stretch occupies residues 248-337; sequence NTKLLQNITD…IAELKAQNEG (90 aa).

The protein belongs to the RNA polymerase alpha chain family. In terms of assembly, homodimer. The RNAP catalytic core consists of 2 alpha, 1 beta, 1 beta' and 1 omega subunit. When a sigma factor is associated with the core the holoenzyme is formed, which can initiate transcription.

It catalyses the reaction RNA(n) + a ribonucleoside 5'-triphosphate = RNA(n+1) + diphosphate. Functionally, DNA-dependent RNA polymerase catalyzes the transcription of DNA into RNA using the four ribonucleoside triphosphates as substrates. In Campylobacter jejuni subsp. doylei (strain ATCC BAA-1458 / RM4099 / 269.97), this protein is DNA-directed RNA polymerase subunit alpha.